The sequence spans 177 residues: Adenine phosphoribosyltransferase (177 aa).

This sequence belongs to the purine/pyrimidine phosphoribosyltransferase family. Homodimer.

Its subcellular location is the cytoplasm. The catalysed reaction is AMP + diphosphate = 5-phospho-alpha-D-ribose 1-diphosphate + adenine. Its pathway is purine metabolism; AMP biosynthesis via salvage pathway; AMP from adenine: step 1/1. Its function is as follows. Catalyzes a salvage reaction resulting in the formation of AMP, that is energically less costly than de novo synthesis. The sequence is that of Adenine phosphoribosyltransferase from Prosthecochloris aestuarii (strain DSM 271 / SK 413).